A 506-amino-acid chain; its full sequence is Methylthioalkylmalate synthase 1, chloroplastic (506 aa).

A chloroplast-targeting transit peptide spans 1-49 (MASSLLTSSVMIPTTGSTVVGRSVLPFQSSLHSLRLTHSYKNPALFISC). Residues 85-359 (VRVFDTTLRD…YTKIDTRQIM (275 aa)) form the Pyruvate carboxyltransferase domain. Residue Ser98 is modified to Phosphoserine.

The protein belongs to the alpha-IPM synthase/homocitrate synthase family. Monomer. The cofactor is Mn(2+). In terms of tissue distribution, highly expressed in leaves, flowers, roots and siliques. Not detected in flowers in PubMed:12432038.

Its subcellular location is the plastid. The protein localises to the chloroplast. The enzyme catalyses an omega-(methylsulfanyl)-2-oxoalkanoate + acetyl-CoA + H2O = a 2-(omega-methylsulfanyl)alkylmalate + CoA + H(+). Its activity is regulated as follows. 1 mM DTT required for activity. Activated by ATP and inhibited by iodoacetamide. In terms of biological role, determines the side chain length of aliphatic glucosinolate structures. Catalyzes exclusively the condensation reactions of both the first and second methionine carbon chain elongation. The chain is Methylthioalkylmalate synthase 1, chloroplastic (MAM1) from Arabidopsis thaliana (Mouse-ear cress).